The following is an 829-amino-acid chain: Dipeptidyl peptidase family member 2 (829 aa).

Topologically, residues 1–27 (MENDNYDVEEQGCSVFNGKHGYFARSC) are cytoplasmic. A helical; Signal-anchor for type II membrane protein membrane pass occupies residues 28–48 (CVVFILIICVIFVFSVIFTFM). Residues 49–829 (QNPINLNSDN…DCFKSNLDLL (781 aa)) are Extracellular-facing. Residues asparagine 61, asparagine 66, asparagine 183, asparagine 209, asparagine 314, and asparagine 359 are each glycosylated (N-linked (GlcNAc...) asparagine). Cysteine 514 and cysteine 533 form a disulfide bridge. The Charge relay system role is filled by serine 691. Cysteine 711 and cysteine 821 are joined by a disulfide. Asparagine 754 carries an N-linked (GlcNAc...) asparagine glycan. Catalysis depends on charge relay system residues aspartate 768 and histidine 800.

The protein belongs to the peptidase S9B family. DPPIV subfamily.

The protein resides in the cell membrane. In terms of biological role, removes N-terminal dipeptides sequentially from polypeptides. Essential for control of distal tip cell migration. This is Dipeptidyl peptidase family member 2 (dpf-2) from Caenorhabditis elegans.